The primary structure comprises 214 residues: uncharacterized protein (214 aa).

The helical transmembrane segment at 9 to 31 threads the bilayer; the sequence is FLYFAISVLVNLLFLKILYIYLF. Positions 53-74 are disordered; that stretch reads APPKKPGKPQKKVVKKKPEAVS. Positions 54 to 67 are enriched in basic residues; sequence PPKKPGKPQKKVVK.

The protein resides in the membrane. This is an uncharacterized protein from Aquifex aeolicus (strain VF5).